The chain runs to 738 residues: DNA repair and recombination protein RAD54-like (738 aa).

The disordered stretch occupies residues 1 to 31 (MRRSLAPSQVAKRKQGPDSDDEEDWEPDMEP). The segment covering 18-29 (DSDDEEDWEPDM) has biased composition (acidic residues). The region spanning 164 to 339 (GRRIENSYGC…FSLVHFVNSG (176 aa)) is the Helicase ATP-binding domain. ATP is bound at residue 177–184 (DEMGLGKT). A DEAH box motif is present at residues 290-293 (DEGH). Positions 493–647 (LVLDYILAMT…CVVDEEQDVE (155 aa)) constitute a Helicase C-terminal domain. Ser566 and Ser567 each carry phosphoserine.

In terms of assembly, homohexamer. Interacts with RAD51. In terms of processing, phosphorylated. Phosphorylations at Ser-566 and Ser-567 allow efficient removal of RAD51 filaments from DNA.

It carries out the reaction ATP + H2O = ADP + phosphate + H(+). Plays an essential role in homologous recombination (HR) which is a major pathway for repairing DNA double-strand breaks (DSBs), single-stranded DNA (ssDNA) gaps, and stalled or collapsed replication forks. Acts as a molecular motor during the homology search and guides RAD51 ssDNA along a donor dsDNA thereby changing the homology search from the diffusion-based mechanism to a motor-guided mechanism. Also plays an essential role in RAD51-mediated synaptic complex formation which consists of three strands encased in a protein filament formed once homology is recognized. Once DNA strand exchange occured, dissociates RAD51 from nucleoprotein filaments formed on dsDNA. In Danio rerio (Zebrafish), this protein is DNA repair and recombination protein RAD54-like (rad54l).